Here is a 202-residue protein sequence, read N- to C-terminus: ATP-dependent dethiobiotin synthetase BioD (202 aa).

Position 12–17 (12–17) interacts with ATP; it reads GIGKTI. Thr-16 lines the Mg(2+) pocket. Lys-32 is a catalytic residue. Ser-36 contributes to the substrate binding site. ATP-binding positions include Asp-43, 94-97, and 178-180; these read EGAG and PVV. Residues Asp-43 and Glu-94 each contribute to the Mg(2+) site.

Belongs to the dethiobiotin synthetase family. As to quaternary structure, homodimer. Mg(2+) serves as cofactor.

The protein localises to the cytoplasm. The enzyme catalyses (7R,8S)-7,8-diammoniononanoate + CO2 + ATP = (4R,5S)-dethiobiotin + ADP + phosphate + 3 H(+). Its pathway is cofactor biosynthesis; biotin biosynthesis; biotin from 7,8-diaminononanoate: step 1/2. Catalyzes a mechanistically unusual reaction, the ATP-dependent insertion of CO2 between the N7 and N8 nitrogen atoms of 7,8-diaminopelargonic acid (DAPA, also called 7,8-diammoniononanoate) to form a ureido ring. The sequence is that of ATP-dependent dethiobiotin synthetase BioD from Sphingopyxis alaskensis (strain DSM 13593 / LMG 18877 / RB2256) (Sphingomonas alaskensis).